The chain runs to 103 residues: Host transcription reprogramming factor 6 (103 aa).

A signal peptide spans 1–19; sequence MRATTAFQVIAFLAVGAAA. The C2H2-type zinc finger occupies 66–92; the sequence is YWCPNQVCAKTFATQEERDHHIANTVH. The disordered stretch occupies residues 82–103; sequence ERDHHIANTVHPTNSKRDVLLQ.

Its subcellular location is the secreted. The protein resides in the host nucleus. Probable secreted effector that translocates into the nuclei of host cells to reprogram the expression of targeted genes by binding on effector binding elements in rice. The protein is Host transcription reprogramming factor 6 of Pyricularia oryzae (strain 70-15 / ATCC MYA-4617 / FGSC 8958) (Rice blast fungus).